The primary structure comprises 113 residues: Nucleoid-associated protein RHA1_ro04210 (113 aa).

Belongs to the YbaB/EbfC family. In terms of assembly, homodimer.

The protein localises to the cytoplasm. The protein resides in the nucleoid. Binds to DNA and alters its conformation. May be involved in regulation of gene expression, nucleoid organization and DNA protection. This Rhodococcus jostii (strain RHA1) protein is Nucleoid-associated protein RHA1_ro04210.